We begin with the raw amino-acid sequence, 166 residues long: Transcription antitermination protein NusB (166 aa).

It belongs to the NusB family.

Involved in transcription antitermination. Required for transcription of ribosomal RNA (rRNA) genes. Binds specifically to the boxA antiterminator sequence of the ribosomal RNA (rrn) operons. This Chromohalobacter salexigens (strain ATCC BAA-138 / DSM 3043 / CIP 106854 / NCIMB 13768 / 1H11) protein is Transcription antitermination protein NusB.